Consider the following 303-residue polypeptide: Probable alpha-L-glutamate ligase 1 (303 aa).

Residues 104–287 (LQLLSRKGVG…IAGLIYSFIE (184 aa)) form the ATP-grasp domain. ATP-binding positions include Lys141, 178–179 (EF), Asp187, and 211–213 (RSN). Residues Asp248, Glu260, and Asn262 each contribute to the Mg(2+) site. 3 residues coordinate Mn(2+): Asp248, Glu260, and Asn262.

This sequence belongs to the RimK family. It depends on Mg(2+) as a cofactor. Mn(2+) is required as a cofactor.

The protein is Probable alpha-L-glutamate ligase 1 of Hahella chejuensis (strain KCTC 2396).